The chain runs to 190 residues: MILIIDNYDSFAYNLVQYVGEFDDVTVRRNDAIDVEGIHELDPDGIVVSPGPGTPAEAGVSIDVFAETEYPALGVCLGHQALCAAHGTPVGHAPSVVHGKPSEVRHDGTRLYDGVDDPFEVGRYHSLAVKASELPDTLSETAHTNDEQGIVMGVQHAEKPHIGVQFHPESILTDAGKQIVENFCTGIAKA.

The Glutamine amidotransferase type-1 domain occupies 1–190; sequence MILIIDNYDS…ENFCTGIAKA (190 aa). Residue 51 to 53 coordinates L-glutamine; it reads GPG. The active-site Nucleophile; for GATase activity is the C76. Residues Q80 and 126–127 contribute to the L-glutamine site; that span reads SL. Catalysis depends on residues H167 and E169.

In terms of assembly, tetramer of two components I and two components II.

The enzyme catalyses chorismate + L-glutamine = anthranilate + pyruvate + L-glutamate + H(+). Its pathway is amino-acid biosynthesis; L-tryptophan biosynthesis; L-tryptophan from chorismate: step 1/5. This Haloarcula marismortui (strain ATCC 43049 / DSM 3752 / JCM 8966 / VKM B-1809) (Halobacterium marismortui) protein is Anthranilate synthase component II (trpG2).